Here is a 244-residue protein sequence, read N- to C-terminus: 1-(5-phosphoribosyl)-5-[(5-phosphoribosylamino)methylideneamino] imidazole-4-carboxamide isomerase (244 aa).

Residue D8 is the Proton acceptor of the active site. The active-site Proton donor is D129.

Belongs to the HisA/HisF family.

The protein localises to the cytoplasm. The enzyme catalyses 1-(5-phospho-beta-D-ribosyl)-5-[(5-phospho-beta-D-ribosylamino)methylideneamino]imidazole-4-carboxamide = 5-[(5-phospho-1-deoxy-D-ribulos-1-ylimino)methylamino]-1-(5-phospho-beta-D-ribosyl)imidazole-4-carboxamide. It functions in the pathway amino-acid biosynthesis; L-histidine biosynthesis; L-histidine from 5-phospho-alpha-D-ribose 1-diphosphate: step 4/9. In Allorhizobium ampelinum (strain ATCC BAA-846 / DSM 112012 / S4) (Agrobacterium vitis (strain S4)), this protein is 1-(5-phosphoribosyl)-5-[(5-phosphoribosylamino)methylideneamino] imidazole-4-carboxamide isomerase.